Consider the following 214-residue polypeptide: Late embryogenesis abundant protein At1g64065 (214 aa).

A helical transmembrane segment spans residues 41–61 (VYSLTIIVIIFALCLILSSIF).

The protein belongs to the LEA type 2 family.

It is found in the membrane. The sequence is that of Late embryogenesis abundant protein At1g64065 from Arabidopsis thaliana (Mouse-ear cress).